The sequence spans 312 residues: Cytoplasmic dynein intermediate light chain DYN3 (312 aa).

It belongs to the dynein light intermediate chain DYN3 family. As to quaternary structure, the dynein complex consists of at least two heavy chains and a number of intermediate and light chains. Interacts with DYN1.

The protein resides in the cytoplasm. It localises to the cytoskeleton. In terms of biological role, component of the cytoplasmic dynein which acts as a motor for the intracellular retrograde motility of vesicles and organelles along microtubules. May play an important role in the proper orientation of the mitotic spindle into the budding daughter cell yeast. Probably required for normal progression of the cell cycle. The protein is Cytoplasmic dynein intermediate light chain DYN3 (DYN3) of Saccharomyces cerevisiae (strain ATCC 204508 / S288c) (Baker's yeast).